Reading from the N-terminus, the 102-residue chain is Large ribosomal subunit protein uL24 (102 aa).

This sequence belongs to the universal ribosomal protein uL24 family. In terms of assembly, part of the 50S ribosomal subunit.

Functionally, one of two assembly initiator proteins, it binds directly to the 5'-end of the 23S rRNA, where it nucleates assembly of the 50S subunit. In terms of biological role, one of the proteins that surrounds the polypeptide exit tunnel on the outside of the subunit. This Rhizobium rhizogenes (strain K84 / ATCC BAA-868) (Agrobacterium radiobacter) protein is Large ribosomal subunit protein uL24.